We begin with the raw amino-acid sequence, 360 residues long: Phosphoserine aminotransferase (360 aa).

Arg42 contributes to the L-glutamate binding site. Pyridoxal 5'-phosphate is bound by residues 76–77 (AS), Trp102, Thr152, Asp172, and Gln195. Lys196 is subject to N6-(pyridoxal phosphate)lysine. 237–238 (NT) contacts pyridoxal 5'-phosphate.

The protein belongs to the class-V pyridoxal-phosphate-dependent aminotransferase family. SerC subfamily. As to quaternary structure, homodimer. Requires pyridoxal 5'-phosphate as cofactor.

It localises to the cytoplasm. The enzyme catalyses O-phospho-L-serine + 2-oxoglutarate = 3-phosphooxypyruvate + L-glutamate. The catalysed reaction is 4-(phosphooxy)-L-threonine + 2-oxoglutarate = (R)-3-hydroxy-2-oxo-4-phosphooxybutanoate + L-glutamate. It participates in amino-acid biosynthesis; L-serine biosynthesis; L-serine from 3-phospho-D-glycerate: step 2/3. Functionally, catalyzes the reversible conversion of 3-phosphohydroxypyruvate to phosphoserine and of 3-hydroxy-2-oxo-4-phosphonooxybutanoate to phosphohydroxythreonine. The polypeptide is Phosphoserine aminotransferase (Bacillus cereus (strain ATCC 14579 / DSM 31 / CCUG 7414 / JCM 2152 / NBRC 15305 / NCIMB 9373 / NCTC 2599 / NRRL B-3711)).